A 198-amino-acid chain; its full sequence is Photosystem I assembly protein Ycf4 (198 aa).

The interval 1–20 is disordered; it reads MTASTTINKGDSPNGDSSAS. The next 2 membrane-spanning stretches (helical) occupy residues 38–58 and 78–98; these read WASI…SSYL and LVMG…WLAI.

It belongs to the Ycf4 family.

It localises to the cellular thylakoid membrane. Its function is as follows. Seems to be required for the assembly of the photosystem I complex. The sequence is that of Photosystem I assembly protein Ycf4 from Trichormus variabilis (strain ATCC 29413 / PCC 7937) (Anabaena variabilis).